The sequence spans 422 residues: 3-phosphoshikimate 1-carboxyvinyltransferase (422 aa).

Residues Lys-20, Ser-21, and Arg-25 each coordinate 3-phosphoshikimate. Lys-20 provides a ligand contact to phosphoenolpyruvate. Residues Gly-90 and Arg-118 each coordinate phosphoenolpyruvate. Positions 161, 162, 163, 189, 305, and 332 each coordinate 3-phosphoshikimate. Gln-163 is a phosphoenolpyruvate binding site. Residue Asp-305 is the Proton acceptor of the active site. Residues Arg-336 and Arg-378 each coordinate phosphoenolpyruvate.

This sequence belongs to the EPSP synthase family. As to quaternary structure, monomer.

The protein resides in the cytoplasm. It carries out the reaction 3-phosphoshikimate + phosphoenolpyruvate = 5-O-(1-carboxyvinyl)-3-phosphoshikimate + phosphate. It functions in the pathway metabolic intermediate biosynthesis; chorismate biosynthesis. Its function is as follows. Catalyzes the transfer of the enolpyruvyl moiety of phosphoenolpyruvate (PEP) to the 5-hydroxyl of shikimate-3-phosphate (S3P) to produce enolpyruvyl shikimate-3-phosphate and inorganic phosphate. The sequence is that of 3-phosphoshikimate 1-carboxyvinyltransferase from Nitrosopumilus maritimus (strain SCM1).